The following is a 648-amino-acid chain: Protein KASH5 (648 aa).

Over 1-606 the chain is Cytoplasmic; sequence MHSILRSSLS…HSPGIRISQH (606 aa). Residues 206–228 are disordered; the sequence is PEAEESANLESFGGEDPRPEGPA. A coiled-coil region spans residues 230 to 420; it reads AELLSNLEDL…EEQLSQSQEG (191 aa). A compositionally biased stretch (acidic residues) spans 473-497; it reads EVEPEPEPEPEPEPEPEPQEVEFPS. Residues 473–545 are disordered; the sequence is EVEPEPEPEP…EESWVLADPS (73 aa). The chain crosses the membrane as a helical; Anchor for type IV membrane protein span at residues 607–627; that stretch reads PLVPTPVLGLLLLLLLSILLF. Residues 628–648 lie on the Perinuclear space side of the membrane; it reads SQSPPPTWPHLQLYYLQPPPV.

As to quaternary structure, core component the LINC complex which is composed of inner nuclear membrane SUN domain-containing proteins coupled to outer nuclear membrane KASH domain-containing nesprins. SUN and KASH domain-containing proteins seem to bind each other promiscuously; however, differentially expression of LINC complex constituents is giving rise to specific assemblies. At least SUN1/2-containing core LINC complexes are proposed to be hexameric composed of three protomers of each KASH and SUN domain-containing protein. Interacts with SUN1; this interaction mediates its telomere localization by forming a SUN1:KASH5 LINC complex. Component of a probable SUN2:KASH5 LINC complex. Self-associates. Interacts with DYNC1H1, DCTN1, DYNC1I1/2 and PAFAH1B1; suggesting the association with the dynein-dynactin motor complex. In terms of tissue distribution, restricted to the testis and the early ootidogenesis ovary. Expressed in spermatocytes and oocytes (at protein level).

It localises to the nucleus outer membrane. It is found in the nucleus. The protein resides in the chromosome. Its subcellular location is the telomere. The protein localises to the nucleus envelope. Functionally, as a component of the LINC (LInker of Nucleoskeleton and Cytoskeleton) complex, involved in the connection between the nuclear lamina and the cytoskeleton. The nucleocytoplasmic interactions established by the LINC complex play an important role in the transmission of mechanical forces across the nuclear envelope and in nuclear movement and positioning. Required for telomere attachment to nuclear envelope in the prophase of meiosis and for rapid telomere prophase movements implicating a SUN1/2:KASH5 LINC complex in which SUN1 and SUN2 seem to act at least partial redundantly. Required for homolog pairing during meiotic prophase in spermatocytes and probably oocytes. Essential for male and female gametogenesis. Recruits cytoplasmic dynein to telomere attachment sites at the nuclear envelope in spermatocytes. In oocytes is involved in meiotic resumption and spindle formation. The chain is Protein KASH5 from Mus musculus (Mouse).